The sequence spans 134 residues: UPF0412 protein YaaI (134 aa).

The signal sequence occupies residues 1-23; that stretch reads MKSVFTLSASLAISLLLCCTAQA.

Belongs to the UPF0412 family.

This Escherichia coli (strain SMS-3-5 / SECEC) protein is UPF0412 protein YaaI.